The chain runs to 337 residues: Molybdate import system permease protein MolB (337 aa).

Residues 1–5 (MQPDS) are Cytoplasmic-facing. Residues 6–25 (YPKILFGLTLLLVITAVISL) form a helical membrane-spanning segment. Residues 26–51 (GIGRYSLSVPQIGQILWAKATALEID) lie on the Periplasmic side of the membrane. A helical transmembrane segment spans residues 52 to 87 (PVQQQVIFQVRLPRILTALCVGAGLALSGVVLQGIF). The Cytoplasmic segment spans residues 88-98 (RNPLVNPHIIG). The chain crosses the membrane as a helical span at residues 99–113 (VTSGSAFGGTLAIFF). The Periplasmic portion of the chain corresponds to 114 to 116 (GFS). The chain crosses the membrane as a helical span at residues 117-140 (LYGLFTSTILFGFGTLALVFLFSF). Residues 141–146 (KFNQRS) are Cytoplasmic-facing. Residues 147–171 (LLMLILIGMILSGLFSALVSLLQYI) form a helical membrane-spanning segment. At 172–193 (SDTEEKLPSIVFWLMGSFATSN) the chain is on the periplasmic side. The chain crosses the membrane as a helical span at residues 194–214 (WEKLLFFFVPFLLCSSILLSL). The Cytoplasmic segment spans residues 215–234 (SWRLNLLSLDEKEAKALGVK). A helical membrane pass occupies residues 235–257 (MAPLRWLVIFLSGSLVACQVAIS). Residues 258–264 (GSIGWVG) lie on the Periplasmic side of the membrane. A helical membrane pass occupies residues 265 to 275 (LIIPHLSRMLV). Over 276 to 278 (GAN) the chain is Cytoplasmic. A helical transmembrane segment spans residues 279–304 (HQSLLPCTMLVGATYMLLVDNVARSL). At 305–310 (SDAEIP) the chain is on the periplasmic side. A helical transmembrane segment spans residues 311–329 (ISILTALIGAPLFGVLVYK). Over 330–337 (LKRGGMNE) the chain is Cytoplasmic.

Belongs to the binding-protein-dependent transport system permease family. FecCD subfamily. In terms of assembly, the complex is composed of two ATP-binding proteins (MolC), two transmembrane proteins (MolB) and a solute-binding protein (MolA).

It localises to the cell inner membrane. The MolBCA complex shows a decrease in affinity in the presence of increasing concentrations of substrate and nucleotide. In terms of biological role, part of the ABC transporter complex MolBCA involved in molybdate import. Responsible for the translocation of the substrate across the membrane. Functions as a low-affinity molybdate transporter. This is Molybdate import system permease protein MolB from Haemophilus influenzae (strain ATCC 51907 / DSM 11121 / KW20 / Rd).